Reading from the N-terminus, the 99-residue chain is Small ribosomal subunit protein uS14m (99 aa).

This sequence belongs to the universal ribosomal protein uS14 family.

The protein localises to the mitochondrion. This chain is Small ribosomal subunit protein uS14m (RPS14), found in Prototheca wickerhamii.